Consider the following 365-residue polypeptide: Histidinol-phosphate aminotransferase 2 (365 aa).

At K222 the chain carries N6-(pyridoxal phosphate)lysine.

The protein belongs to the class-II pyridoxal-phosphate-dependent aminotransferase family. Histidinol-phosphate aminotransferase subfamily. As to quaternary structure, homodimer. Pyridoxal 5'-phosphate is required as a cofactor.

It catalyses the reaction L-histidinol phosphate + 2-oxoglutarate = 3-(imidazol-4-yl)-2-oxopropyl phosphate + L-glutamate. The protein operates within amino-acid biosynthesis; L-histidine biosynthesis; L-histidine from 5-phospho-alpha-D-ribose 1-diphosphate: step 7/9. In Bordetella parapertussis (strain 12822 / ATCC BAA-587 / NCTC 13253), this protein is Histidinol-phosphate aminotransferase 2 (hisC2).